We begin with the raw amino-acid sequence, 197 residues long: Putative RING-H2 finger protein ATL71 (197 aa).

Residues 20-40 (MGGLAYGIGVSIGILMLITTI) traverse the membrane as a helical segment. A disordered region spans residues 53–80 (SASPTTTPRTRRRQRESNGTLPPGQERF). The RING-type; atypical zinc finger occupies 129-171 (CSICLADYKKMDMIRVLPDCNHLFHDNCVDPWLRLHPTCPVCR).

The protein belongs to the RING-type zinc finger family. ATL subfamily.

It localises to the membrane. The catalysed reaction is S-ubiquitinyl-[E2 ubiquitin-conjugating enzyme]-L-cysteine + [acceptor protein]-L-lysine = [E2 ubiquitin-conjugating enzyme]-L-cysteine + N(6)-ubiquitinyl-[acceptor protein]-L-lysine.. Its pathway is protein modification; protein ubiquitination. The chain is Putative RING-H2 finger protein ATL71 (ATL71) from Arabidopsis thaliana (Mouse-ear cress).